The primary structure comprises 448 residues: uncharacterized protein (448 aa).

Topologically, residues 1–50 (MAPEIFVKFKCASRDIKLLWASVFLRLLSYGLTNQVLTLFLNAINMTEDK) are extracellular. The helical transmembrane segment at 51–71 (IGLFMSLTLAGDVICSYILTW) threads the bilayer. The Cytoplasmic segment spans residues 72–93 (YADSWGRRRVLVYGCAMMLLSG). A helical membrane pass occupies residues 94–114 (LVFSFSENFTLLLVFAIFGVI). Residues 115–146 (SPSSDEVGPFKSIEEAMIAHLSPHNARPEIYA) lie on the Extracellular side of the membrane. A helical membrane pass occupies residues 147 to 167 (IHALVGTIGSALGAIICGIFV). The Cytoplasmic portion of the chain corresponds to 168–184 (DLLKRTGLAATDLQCYK). The chain crosses the membrane as a helical span at residues 185–205 (LVFLLYAFFAFCKMVIMLLLS). Topologically, residues 206-260 (DATELDGHYEHTDCNEETAEPLDVNDETAPLMRQATHPEERSNKLSKETVSVLMK) are extracellular. Residues 261 to 281 (LLVIFMVDSLGSGFMTSGWMV) traverse the membrane as a helical segment. The Cytoplasmic portion of the chain corresponds to 282 to 287 (YYYSKQ). The chain crosses the membrane as a helical span at residues 288 to 308 (FLMGSLALGTLFFITQLVMAS). Residues 309–333 (STIPSSIIARCFGPVRATLLVQIPS) are Extracellular-facing. The helical transmembrane segment at 334-354 (GIFSILIPMAKNYLPLSILFL) threads the bilayer. Residues 355-386 (NLHFATTAMDVTPRQILLTNIIKPRDLTKVMG) lie on the Cytoplasmic side of the membrane. 386-393 (GVVNIGKT) serves as a coordination point for ATP. The helical transmembrane segment at 387–407 (VVNIGKTFARCVGPIFTGILA) threads the bilayer. Residues 408–416 (NNNYLWLCY) lie on the Extracellular side of the membrane. The helical transmembrane segment at 417 to 437 (IISGSLVITADLILACMFLGV) threads the bilayer. The Cytoplasmic portion of the chain corresponds to 438–448 (DAKIKKQMNRH).

It is found in the membrane. This is an uncharacterized protein from Saccharomyces cerevisiae (strain ATCC 204508 / S288c) (Baker's yeast).